The following is a 547-amino-acid chain: G protein-coupled receptor associated sorting protein 3 (547 aa).

Basic residues predominate over residues 1–10 (MAGTKNKTRA). 2 disordered regions span residues 1–32 (MAGT…EATG) and 80–102 (TLGK…STCK).

This sequence belongs to the GPRASP family. In terms of assembly, homodimer. Highly expressed in brain. Not expressed in lung or liver. Down-regulated in brain from patients suffering from Alzheimer disease.

Its subcellular location is the cytoplasm. The protein localises to the nucleus. Survival and differentiation promoting protein that plays a role in the regulation of neurosynaptogenesis. Induces phosphatase PP2A activity which results in APP dephosphorylation and inhibits BACE1-mediated processing of APP. This Homo sapiens (Human) protein is G protein-coupled receptor associated sorting protein 3.